The sequence spans 593 residues: UvrABC system protein C (593 aa).

Residues 17 to 94 (MEPGCYLMKD…IKQYQPRYNI (78 aa)) form the GIY-YIG domain. The 36-residue stretch at 199-234 (KTILKSLEERMLTASESLDFERAKEYRDLIQHIQNL) folds into the UVR domain.

This sequence belongs to the UvrC family. Interacts with UvrB in an incision complex.

It is found in the cytoplasm. Functionally, the UvrABC repair system catalyzes the recognition and processing of DNA lesions. UvrC both incises the 5' and 3' sides of the lesion. The N-terminal half is responsible for the 3' incision and the C-terminal half is responsible for the 5' incision. This chain is UvrABC system protein C, found in Staphylococcus aureus (strain bovine RF122 / ET3-1).